Here is a 280-residue protein sequence, read N- to C-terminus: MSATGPFSIGERVQLTDAKGRRYTMSLTPGAEFHTHRGSIAHDAVIGLEQGSVVKSSNGALFLVLRPLLVDYVMSMPRGPQVIYPKDAAQIVHEGDIFPGARVLEAGAGSGALTLSLLRAVGPAGQVISYEQRADHAEHARRNVSGCYGQPPDNWRLVVSDLADSELPDGSVDRAVLDMLAPWEVLDAVSRLLVAGGVLMVYVATVTQLSRIVEALRAKQCWTEPRAWETLQRGWNVVGLAVRPQHSMRGHTAFLVATRRLAPGAVAPAPLGRKREGRDG.

S-adenosyl-L-methionine contacts are provided by residues 110 to 113 (SGAL), Glu131, His136, Asp161, and Asp178.

Belongs to the class I-like SAM-binding methyltransferase superfamily. TRM61 family. In terms of assembly, homotetramer composed of a dimer of dimers.

The enzyme catalyses adenosine(58) in tRNA + S-adenosyl-L-methionine = N(1)-methyladenosine(58) in tRNA + S-adenosyl-L-homocysteine + H(+). Its activity is regulated as follows. Inhibited by Mg(2+). Functionally, catalyzes the S-adenosyl-L-methionine-dependent formation of N(1)-methyladenine at position 58 (m1A58) in tRNA. The polypeptide is tRNA (adenine(58)-N(1))-methyltransferase TrmI (trmI) (Mycobacterium tuberculosis (strain ATCC 25618 / H37Rv)).